Here is a 167-residue protein sequence, read N- to C-terminus: Transcription antitermination protein NusB (167 aa).

The segment at 1 to 32 (MSDTPETGKPAAGTKPAARTEAKAPPKSARRR) is disordered.

It belongs to the NusB family.

Involved in transcription antitermination. Required for transcription of ribosomal RNA (rRNA) genes. Binds specifically to the boxA antiterminator sequence of the ribosomal RNA (rrn) operons. In Cupriavidus pinatubonensis (strain JMP 134 / LMG 1197) (Cupriavidus necator (strain JMP 134)), this protein is Transcription antitermination protein NusB.